Reading from the N-terminus, the 430-residue chain is C-terminal-binding protein 1 (430 aa).

Residues 1 to 59 (MSGVRPPIMNGPMHPRPLVALLDGRDCTVEMPILKDVATVAFCDAQSTQEIHEKVLNEA) are interaction with GLIS2 1. Residues serine 89, 169–174 (IGLGRV), aspartate 193, 226–232 (CGLNEHN), 253–255 (TAR), and aspartate 279 each bind NAD(+). Arginine 255 is an active-site residue. Positions 277-349 (ALDVHESEPF…VNKDHLTAAT (73 aa)) are interaction with GLIS2 2. The active site involves glutamate 284. Phosphoserine is present on serine 289. The active-site Proton donor is histidine 304. The segment at 398–430 (SHGLPPVAHPPHAPSPGQTVKPEADRDHTTDQL) is disordered. Serine 412 bears the Phosphoserine mark. Lysine 418 participates in a covalent cross-link: Glycyl lysine isopeptide (Lys-Gly) (interchain with G-Cter in SUMO). The segment covering 419 to 430 (PEADRDHTTDQL) has biased composition (basic and acidic residues).

It belongs to the D-isomer specific 2-hydroxyacid dehydrogenase family. Homo- or heterodimer. Heterodimer with CTBP2. Interacts with ELK3 (via its PXDLS motif). Interacts with RBBP8 (via its PXDLS motif); the interaction is disrupted by binding to adenovirus E1A. Interacts with PNN, MECOM and ZFHX1B. Interacts with ZNF366 (via PXDLS motif). Interaction with SATB1 (non-acetylated form); the interaction stabilizes its attachment to DNA and promotes transcription repression. Interacts with PRDM16; the interaction represses white adipose tissue (WAT)-specific genes expression. Interacts with GLIS2, HIPK2, FOXP1, FOXP2, HDAC4, HDAC5, HDAC9, NRIP1 and WIZ. Interacts with ZNF217. Interacts with BCL6; the interaction is required for BCL6 transcriptional autoinhibition and inhibition of some BCL6 target genes. Interacts with IKZF4. Interacts with MCRIP1 (unphosphorylated form, via the PXDLS motif); competitively inhibiting CTBP-ZEB1 interaction. Interacts with Bassoon/BSN; this interaction targets and anchors CTBP1 to presynapses. Interacts with SIMC1. Requires NAD(+) as cofactor. The level of phosphorylation appears to be regulated during the cell cycle. Phosphorylation by HIPK2 on Ser-412 induces proteasomal degradation. Post-translationally, ADP-ribosylated; when cells are exposed to brefeldin A. In terms of processing, sumoylation on Lys-418 is promoted by the E3 SUMO-protein ligase CBX4.

The protein localises to the cytoplasm. Its subcellular location is the nucleus. It localises to the synapse. It is found in the synaptosome. In terms of biological role, corepressor targeting diverse transcription regulators such as GLIS2 or BCL6. Has dehydrogenase activity. Involved in controlling the equilibrium between tubular and stacked structures in the Golgi complex. Functions in brown adipose tissue (BAT) differentiation. The chain is C-terminal-binding protein 1 (Ctbp1) from Rattus norvegicus (Rat).